Reading from the N-terminus, the 94-residue chain is Acylphosphatase (94 aa).

Residues 3–90 (RVHVIVEGRV…PDEKQFRIMY (88 aa)) enclose the Acylphosphatase-like domain. Active-site residues include R18 and N36.

This sequence belongs to the acylphosphatase family.

The enzyme catalyses an acyl phosphate + H2O = a carboxylate + phosphate + H(+). The chain is Acylphosphatase (acyP) from Geobacillus thermodenitrificans (strain NG80-2).